We begin with the raw amino-acid sequence, 95 residues long: Aspartyl/glutamyl-tRNA(Asn/Gln) amidotransferase subunit C (95 aa).

It belongs to the GatC family. As to quaternary structure, heterotrimer of A, B and C subunits.

The catalysed reaction is L-glutamyl-tRNA(Gln) + L-glutamine + ATP + H2O = L-glutaminyl-tRNA(Gln) + L-glutamate + ADP + phosphate + H(+). The enzyme catalyses L-aspartyl-tRNA(Asn) + L-glutamine + ATP + H2O = L-asparaginyl-tRNA(Asn) + L-glutamate + ADP + phosphate + 2 H(+). Functionally, allows the formation of correctly charged Asn-tRNA(Asn) or Gln-tRNA(Gln) through the transamidation of misacylated Asp-tRNA(Asn) or Glu-tRNA(Gln) in organisms which lack either or both of asparaginyl-tRNA or glutaminyl-tRNA synthetases. The reaction takes place in the presence of glutamine and ATP through an activated phospho-Asp-tRNA(Asn) or phospho-Glu-tRNA(Gln). This is Aspartyl/glutamyl-tRNA(Asn/Gln) amidotransferase subunit C from Lysinibacillus sphaericus (strain C3-41).